Consider the following 201-residue polypeptide: Probable GTP-binding protein EngB (201 aa).

The EngB-type G domain maps to 21 to 191; it reads AAPQIILAGR…WNLLDVTAIP (171 aa). Residues 29–36, 56–60, 75–78, 142–145, and 168–172 contribute to the GTP site; these read GRSNVGKS, GKTRS, DLPG, TKSD, and ICVSS. The Mg(2+) site is built by Ser36 and Thr58.

The protein belongs to the TRAFAC class TrmE-Era-EngA-EngB-Septin-like GTPase superfamily. EngB GTPase family. The cofactor is Mg(2+).

Functionally, necessary for normal cell division and for the maintenance of normal septation. In Maridesulfovibrio salexigens (strain ATCC 14822 / DSM 2638 / NCIMB 8403 / VKM B-1763) (Desulfovibrio salexigens), this protein is Probable GTP-binding protein EngB.